Here is a 346-residue protein sequence, read N- to C-terminus: Phenylalanine--tRNA ligase alpha subunit (346 aa).

Residue E261 participates in Mg(2+) binding.

This sequence belongs to the class-II aminoacyl-tRNA synthetase family. Phe-tRNA synthetase alpha subunit type 1 subfamily. As to quaternary structure, tetramer of two alpha and two beta subunits. Mg(2+) is required as a cofactor.

It is found in the cytoplasm. It carries out the reaction tRNA(Phe) + L-phenylalanine + ATP = L-phenylalanyl-tRNA(Phe) + AMP + diphosphate + H(+). The chain is Phenylalanine--tRNA ligase alpha subunit from Dehalococcoides mccartyi (strain ATCC BAA-2100 / JCM 16839 / KCTC 5957 / BAV1).